The following is a 138-amino-acid chain: Large ribosomal subunit protein uL16 (138 aa).

Basic residues predominate over residues 1–16 (MLIPKRVKYRRQHRPT). Residues 1–23 (MLIPKRVKYRRQHRPTRSGVSKG) are disordered.

This sequence belongs to the universal ribosomal protein uL16 family. In terms of assembly, part of the 50S ribosomal subunit.

In terms of biological role, binds 23S rRNA and is also seen to make contacts with the A and possibly P site tRNAs. In Corynebacterium aurimucosum (strain ATCC 700975 / DSM 44827 / CIP 107346 / CN-1) (Corynebacterium nigricans), this protein is Large ribosomal subunit protein uL16.